The chain runs to 345 residues: Heat-inducible transcription repressor HrcA (345 aa).

Belongs to the HrcA family.

In terms of biological role, negative regulator of class I heat shock genes (grpE-dnaK-dnaJ and groELS operons). Prevents heat-shock induction of these operons. The protein is Heat-inducible transcription repressor HrcA of Tetragenococcus halophilus (Pediococcus halophilus).